We begin with the raw amino-acid sequence, 501 residues long: Cytochrome P450 71B23 (501 aa).

The chain crosses the membrane as a helical span at residues 1–21; that stretch reads MSIFLCFLLLLLLLLVTIIFT. C443 provides a ligand contact to heme.

Belongs to the cytochrome P450 family. Requires heme as cofactor.

The protein localises to the membrane. In Arabidopsis thaliana (Mouse-ear cress), this protein is Cytochrome P450 71B23 (CYP71B23).